The chain runs to 528 residues: Capsid scaffolding protein (528 aa).

Residues His-46, Ser-116, and His-135 each act as charge relay system in the active site. Residues 270–288 (HGNYDAVESATATTAMSNQ) are interaction with pAP. The interval 394-431 (KKRHFQSDSEDELSFPGDPEYTKKRRRHRVDNDDDKEM) is disordered. Residues 416–422 (KKRRRHR) carry the Nuclear localization signal motif. The interaction with major capsid protein stretch occupies residues 508-528 (STDLLKLNKKLFVDALNKMDS).

This sequence belongs to the herpesviridae capsid scaffolding protein family. As to quaternary structure, homomultimer. Interacts with major capsid protein. In terms of assembly, exists in a monomer-dimer equilibrium with the dimer being the active species. Capsid scaffolding protein is cleaved by assemblin after formation of the spherical procapsid. As a result, the capsid obtains its mature, icosahedral shape. Cleavages occur at two or more sites: release (R-site) and maturation (M-site).

It is found in the host cytoplasm. It localises to the host nucleus. The catalysed reaction is Cleaves -Ala-|-Ser- and -Ala-|-Ala- bonds in the scaffold protein.. Acts as a scaffold protein by binding major capsid protein in the cytoplasm, inducing the nuclear localization of both proteins. Multimerizes in the nucleus such as major capsid protein forms the icosahedral T=16 capsid. Autocatalytic cleavage releases the assembly protein, and subsequently abolishes interaction with major capsid protein. Cleavages products are evicted from the capsid before or during DNA packaging. In terms of biological role, protease that plays an essential role in virion assembly within the nucleus. Catalyzes the cleavage of the assembly protein after formation of the spherical procapsid. By that cleavage, the capsid matures and gains its icosahedral shape. The cleavage sites seem to include -Ala-Ser-, -Ala-Ala-, as well as Ala-Thr bonds. Assemblin and cleavages products are evicted from the capsid before or during DNA packaging. Its function is as follows. Plays a major role in capsid assembly. Acts as a scaffold protein by binding major capsid protein. Multimerizes in the nucleus such as major capsid protein forms the icosahedral T=16 capsid. Cleaved by assemblin after capsid completion. The cleavages products are evicted from the capsid before or during DNA packaging. This chain is Capsid scaffolding protein (U53), found in Homo sapiens (Human).